The following is a 501-amino-acid chain: Glucose-6-phosphate exchanger SLC37A2 (501 aa).

Residues 19-39 (SWFRGFILLLTFLIYACYHMS) traverse the membrane as a helical segment. N-linked (GlcNAc...) asparagine glycans are attached at residues asparagine 53, asparagine 62, and asparagine 68. 5 helical membrane-spanning segments follow: residues 88-108 (GAVD…SGIF), 118-140 (LSAG…FWNI), 142-164 (MLWY…WPSV), 179-199 (FIMG…SLIA), and 210-230 (SFIV…LFLI). The span at 240-252 (PPRHHDDPEKEQD) shows a compositional bias: basic and acidic residues. Residues 240–266 (PPRHHDDPEKEQDNPEDPVNSPYSSRE) are disordered. Transmembrane regions (helical) follow at residues 303–323 (CLLF…LYIF), 334–354 (GDLS…AGLI), 362–382 (ATTC…YNYI), 391–411 (IVML…ITTA), 434–454 (AIID…AGLI), and 462–482 (VFYM…RLVY).

The protein belongs to the major facilitator superfamily. Organophosphate:Pi antiporter (OPA) (TC 2.A.1.4) family. Highly expressed in bone marrow derived macrophages, and weakly in spleen.

Its subcellular location is the endoplasmic reticulum membrane. The enzyme catalyses D-glucose 6-phosphate(in) + phosphate(out) = D-glucose 6-phosphate(out) + phosphate(in). With respect to regulation, inhibited by vanadate but not by chlorogenic acid. In terms of biological role, inorganic phosphate and glucose-6-phosphate antiporter. May transport cytoplasmic glucose-6-phosphate into the lumen of the endoplasmic reticulum and translocate inorganic phosphate into the opposite direction. Independent of a lumenal glucose-6-phosphatase. May not play a role in homeostatic regulation of blood glucose levels. This is Glucose-6-phosphate exchanger SLC37A2 from Mus musculus (Mouse).